The chain runs to 205 residues: Potassium-transporting ATPase KdpC subunit (205 aa).

A helical transmembrane segment spans residues 7–27 (PAIVILVALTIITGLIYPLAM).

The protein belongs to the KdpC family. As to quaternary structure, the system is composed of three essential subunits: KdpA, KdpB and KdpC.

Its subcellular location is the cell inner membrane. Functionally, part of the high-affinity ATP-driven potassium transport (or Kdp) system, which catalyzes the hydrolysis of ATP coupled with the electrogenic transport of potassium into the cytoplasm. This subunit acts as a catalytic chaperone that increases the ATP-binding affinity of the ATP-hydrolyzing subunit KdpB by the formation of a transient KdpB/KdpC/ATP ternary complex. The sequence is that of Potassium-transporting ATPase KdpC subunit from Nitrobacter hamburgensis (strain DSM 10229 / NCIMB 13809 / X14).